We begin with the raw amino-acid sequence, 318 residues long: Putative S-adenosyl-L-methionine-dependent methyltransferase MMAR_1595 (318 aa).

S-adenosyl-L-methionine contacts are provided by residues E132 and 161 to 162 (DL).

It belongs to the UPF0677 family.

Its function is as follows. Exhibits S-adenosyl-L-methionine-dependent methyltransferase activity. This Mycobacterium marinum (strain ATCC BAA-535 / M) protein is Putative S-adenosyl-L-methionine-dependent methyltransferase MMAR_1595.